Reading from the N-terminus, the 320-residue chain is Biotin synthase (320 aa).

A Radical SAM core domain is found at 45 to 274 (NDLQKASLLS…DSRIRLSAGR (230 aa)). [4Fe-4S] cluster is bound by residues cysteine 60, cysteine 64, and cysteine 67. Cysteine 105, cysteine 137, cysteine 197, and arginine 269 together coordinate [2Fe-2S] cluster.

The protein belongs to the radical SAM superfamily. Biotin synthase family. Homodimer. [4Fe-4S] cluster is required as a cofactor. Requires [2Fe-2S] cluster as cofactor.

It catalyses the reaction (4R,5S)-dethiobiotin + (sulfur carrier)-SH + 2 reduced [2Fe-2S]-[ferredoxin] + 2 S-adenosyl-L-methionine = (sulfur carrier)-H + biotin + 2 5'-deoxyadenosine + 2 L-methionine + 2 oxidized [2Fe-2S]-[ferredoxin]. It functions in the pathway cofactor biosynthesis; biotin biosynthesis; biotin from 7,8-diaminononanoate: step 2/2. Functionally, catalyzes the conversion of dethiobiotin (DTB) to biotin by the insertion of a sulfur atom into dethiobiotin via a radical-based mechanism. The polypeptide is Biotin synthase (Beijerinckia indica subsp. indica (strain ATCC 9039 / DSM 1715 / NCIMB 8712)).